We begin with the raw amino-acid sequence, 251 residues long: Hydroxyacylglutathione hydrolase (251 aa).

His53, His55, Asp57, His58, His110, Asp127, and His165 together coordinate Zn(2+).

The protein belongs to the metallo-beta-lactamase superfamily. Glyoxalase II family. In terms of assembly, monomer. Zn(2+) is required as a cofactor.

It catalyses the reaction an S-(2-hydroxyacyl)glutathione + H2O = a 2-hydroxy carboxylate + glutathione + H(+). Its pathway is secondary metabolite metabolism; methylglyoxal degradation; (R)-lactate from methylglyoxal: step 2/2. Its function is as follows. Thiolesterase that catalyzes the hydrolysis of S-D-lactoyl-glutathione to form glutathione and D-lactic acid. This Yersinia enterocolitica serotype O:8 / biotype 1B (strain NCTC 13174 / 8081) protein is Hydroxyacylglutathione hydrolase.